A 160-amino-acid chain; its full sequence is Phosphopantetheine adenylyltransferase (160 aa).

A substrate-binding site is contributed by serine 10. Residues 10–11 (SF) and histidine 18 each bind ATP. Lysine 42, threonine 74, and arginine 88 together coordinate substrate. ATP contacts are provided by residues 89–91 (GLR), glutamate 99, and 124–130 (YSFVSST).

The protein belongs to the bacterial CoaD family. Homohexamer. The cofactor is Mg(2+).

It is found in the cytoplasm. The enzyme catalyses (R)-4'-phosphopantetheine + ATP + H(+) = 3'-dephospho-CoA + diphosphate. It functions in the pathway cofactor biosynthesis; coenzyme A biosynthesis; CoA from (R)-pantothenate: step 4/5. Functionally, reversibly transfers an adenylyl group from ATP to 4'-phosphopantetheine, yielding dephospho-CoA (dPCoA) and pyrophosphate. The protein is Phosphopantetheine adenylyltransferase of Leptospira biflexa serovar Patoc (strain Patoc 1 / Ames).